A 346-amino-acid polypeptide reads, in one-letter code: Leucine zipper protein 2 (346 aa).

The N-terminal stretch at 1–19 is a signal peptide; that stretch reads MKFSPAHYLLPLLPALVLS. The stretch at 16-211 forms a coiled coil; that stretch reads LVLSTRQDYE…QMKAMKETVQ (196 aa). A glycan (N-linked (GlcNAc...) asparagine) is linked at N133. Positions 164-192 are leucine-zipper; the sequence is LRYGKKDLLFKAQQLTDLEQKLAVAKNEL. The interval 225-346 is disordered; the sequence is ALSLITSNPT…GMAAREEKIL (122 aa). The span at 250–261 shows a compositional bias: low complexity; the sequence is AAAKSKPQQSAS. Polar residues predominate over residues 262 to 283; it reads GNNESSQVESTKEGSPSTTACD. N264 is a glycosylation site (N-linked (GlcNAc...) asparagine). A compositionally biased stretch (basic and acidic residues) spans 286-298; sequence DEGRTCSIKHKES. A glycan (N-linked (GlcNAc...) asparagine) is linked at N302.

The protein resides in the secreted. This chain is Leucine zipper protein 2 (LUZP2), found in Pongo abelii (Sumatran orangutan).